Here is a 1464-residue protein sequence, read N- to C-terminus: DNA polymerase III PolC-type (1464 aa).

The Exonuclease domain occupies 426-582 (YVVFDVETTG…YDAEATGRLL (157 aa)).

This sequence belongs to the DNA polymerase type-C family. PolC subfamily.

It is found in the cytoplasm. It carries out the reaction DNA(n) + a 2'-deoxyribonucleoside 5'-triphosphate = DNA(n+1) + diphosphate. In terms of biological role, required for replicative DNA synthesis. This DNA polymerase also exhibits 3' to 5' exonuclease activity. The protein is DNA polymerase III PolC-type of Streptococcus thermophilus (strain ATCC BAA-250 / LMG 18311).